Here is a 259-residue protein sequence, read N- to C-terminus: Probable metal transport system ATP-binding protein TC_0339 (259 aa).

An ABC transporter domain is found at 9-241 (WAVDDLCVNY…AIFQAYGCEL (233 aa)). Residue 41-48 (GPNGAGKS) participates in ATP binding.

It belongs to the ABC transporter superfamily.

It localises to the cell inner membrane. Its function is as follows. Part of an ATP-driven transport system TC_0338/TC_0339/TC_0341/TC_0342 for a metal. Probably responsible for energy coupling to the transport system. The polypeptide is Probable metal transport system ATP-binding protein TC_0339 (Chlamydia muridarum (strain MoPn / Nigg)).